The following is a 616-amino-acid chain: Glycogenin-1 (616 aa).

Leu-10, Tyr-16, and Arg-95 together coordinate UDP. Residues Leu-10, Tyr-16, Arg-95, Lys-104, Asp-120, Asp-122, Asn-158, Ser-159, Asp-185, Asp-188, and Gln-189 each coordinate UDP-alpha-D-glucose. Residues Asp-120 and Asp-122 each contribute to the UDP site. The Mn(2+) site is built by Asp-120 and Asp-122. The O-linked (Glc...) tyrosine glycan is linked to Tyr-230. UDP contacts are provided by His-247, Gly-250, and Lys-253. His-247 is a binding site for Mn(2+). UDP-alpha-D-glucose is bound by residues Gly-250 and Lys-253. The span at 283 to 302 shows a compositional bias: basic and acidic residues; it reads HQLNNEVSKPKISDSDKTET. Disordered regions lie at residues 283–320, 335–354, and 371–516; these read HQLN…PTTN, NQNA…NPVP, and TNQP…SVDD. Basic and acidic residues predominate over residues 377-386; sequence ESREYSKEND. Positions 400–419 are enriched in polar residues; sequence SPPNSTQEPNSSYSVVSTQA. Residues 450 to 461 are compositionally biased toward low complexity; sequence STAASSNNNVSN. 2 stretches are compositionally biased toward polar residues: residues 462-485 and 492-503; these read QPDN…PSNP and DNIQKPSVSTND. Residue Tyr-598 is glycosylated (O-linked (Glc...) tyrosine).

It belongs to the glycosyltransferase 8 family. Glycogenin subfamily. Mn(2+) serves as cofactor.

The protein localises to the cytoplasm. The protein resides in the vacuole. It carries out the reaction L-tyrosyl-[glycogenin] + UDP-alpha-D-glucose = alpha-D-glucosyl-L-tyrosyl-[glycogenin] + UDP + H(+). It catalyses the reaction [1,4-alpha-D-glucosyl](n)-L-tyrosyl-[glycogenin] + UDP-alpha-D-glucose = [1,4-alpha-D-glucosyl](n+1)-L-tyrosyl-[glycogenin] + UDP + H(+). Self-glucosylating initiator of glycogen synthesis. It catalyzes the formation of a short alpha (1,4)-glucosyl chain covalently attached via a glucose 1-O-tyrosyl linkage to internal tyrosine residues and these chains act as primers for the elongation reaction catalyzed by glycogen synthase. Capable of transferring glucosyl residues to unbound acceptors such as free oligoglucans or oligoglucan derivatives. The sequence is that of Glycogenin-1 (GLG1) from Saccharomyces cerevisiae (strain YJM789) (Baker's yeast).